The chain runs to 310 residues: tRNA-cytidine(32) 2-sulfurtransferase (310 aa).

Positions 44 to 49 (SGGKDS) match the PP-loop motif motif. The [4Fe-4S] cluster site is built by Cys119, Cys122, and Cys210.

Belongs to the TtcA family. In terms of assembly, homodimer. Requires Mg(2+) as cofactor. The cofactor is [4Fe-4S] cluster.

It localises to the cytoplasm. It carries out the reaction cytidine(32) in tRNA + S-sulfanyl-L-cysteinyl-[cysteine desulfurase] + AH2 + ATP = 2-thiocytidine(32) in tRNA + L-cysteinyl-[cysteine desulfurase] + A + AMP + diphosphate + H(+). The protein operates within tRNA modification. Functionally, catalyzes the ATP-dependent 2-thiolation of cytidine in position 32 of tRNA, to form 2-thiocytidine (s(2)C32). The sulfur atoms are provided by the cysteine/cysteine desulfurase (IscS) system. This chain is tRNA-cytidine(32) 2-sulfurtransferase, found in Saccharophagus degradans (strain 2-40 / ATCC 43961 / DSM 17024).